The chain runs to 517 residues: Protein disulfide-isomerase EUG1 (517 aa).

Positions 1–29 are cleaved as a signal peptide; it reads MQVTTRFISAIVSFCLFASFTLAENSARA. Positions 30–141 constitute a Thioredoxin 1 domain; sequence TPGSDLLVLT…ITQYMIQLYE (112 aa). N-linked (GlcNAc...) asparagine glycans are attached at residues asparagine 159, asparagine 174, asparagine 207, asparagine 293, and asparagine 462. The Thioredoxin 2 domain occupies 355-487; that stretch reads YREGTAKPIV…VFEFIKESGT (133 aa). A Prevents secretion from ER motif is present at residues 514-517; sequence HDEL.

Belongs to the protein disulfide isomerase family. In terms of assembly, interacts with EPS1. Post-translationally, may have O-linked mannose residues.

The protein localises to the endoplasmic reticulum lumen. The enzyme catalyses Catalyzes the rearrangement of -S-S- bonds in proteins.. Its function is as follows. Probably interacts with nascent polypeptides in the endoplasmic reticulum. It is an essential gene only in the absence of PDI. Its native disulfide isomerase activity is very low. The polypeptide is Protein disulfide-isomerase EUG1 (EUG1) (Saccharomyces cerevisiae (strain ATCC 204508 / S288c) (Baker's yeast)).